The chain runs to 232 residues: Single-stranded DNA-binding protein (232 aa).

Composition is skewed to acidic residues over residues 190-200 and 216-232; these read GEDEWADEVED and EWQE…DEDF. The interval 190 to 232 is disordered; it reads GEDEWADEVEDGGYTASESRQSRDEQEWQEDEHEETPDDDEDF. Positions 213–232 are dimerization and interaction with the viral DNA polymerase and helicase; sequence DEQEWQEDEHEETPDDDEDF.

It belongs to the Teseptimavirus single-stranded DNA-binding protein family. In terms of assembly, homodimer. Interacts (via C-terminus) with the viral DNA polymerase. Interacts with the viral helicase/primase. Part of the replicase complex that includes the DNA polymerase, the primase/helicase and the single-stranded DNA binding protein.

Its function is as follows. Single-stranded DNA-binding protein that participates in viral DNA replication, formation of concatemers, recombination and repair of double-stranded breaks. Coats the lagging-strand ssDNA as the replication fork advances and stimulates the activities of viral DNA polymerase and primase/helicase. Coordinates simultaneous synthesis of leading- and lagging-strands. Together with DNA primase/helicase, promotes pairing of two homologous DNA molecules containing complementary single-stranded regions and mediates homologous DNA strand exchange. Also promotes the formation of joint molecules. Disrupts loops, hairpins and other secondary structures present on ssDNA to reduce and eliminate pausing of viral DNA polymerase at specific sites during elongation. This is Single-stranded DNA-binding protein (2.5) from Enterobacteria phage T3 (Bacteriophage T3).